The chain runs to 645 residues: Rab11 family-interacting protein 1 (645 aa).

The C2 domain occupies 1–128 (MSLAASAGRG…DQGRRKKQWY (128 aa)). Over residues 171-187 (PFGKLKDKIKGKNKDSA) the composition is skewed to basic and acidic residues. The disordered stretch occupies residues 171-215 (PFGKLKDKIKGKNKDSASDTASAIVPSVTPSVDSDDESFSKDKKK). Ser-186, Ser-204, Ser-208, and Ser-236 each carry phosphoserine. The interval 259-296 (WDDDAHEDESSSASDVMSHKRTSSTDQQPNQSNFSLPK) is disordered. Residues 282–293 (STDQQPNQSNFS) show a composition bias toward polar residues. A phosphoserine mark is found at Ser-301, Ser-316, Ser-340, Ser-342, Ser-344, Ser-346, Ser-357, Ser-358, and Ser-383. The disordered stretch occupies residues 330–545 (PEARSEIRES…PRPHPVKPMN (216 aa)). Composition is skewed to basic and acidic residues over residues 378–391 (SDRRLSDSSTKDSM) and 418–432 (AARETKDSKKQESKK). Phosphoserine is present on Ser-434. A compositionally biased stretch (basic and acidic residues) spans 459-487 (SEKEKERKGALVEAQLREEDLMRRPEKDA). One can recognise an FIP-RBD domain in the interval 573–635 (KKYQPSDPAF…EETPNILRVP (63 aa)). The tract at residues 581–645 (AFAYAQLTHD…AQMGKKAGKM (65 aa)) is necessary for interaction with RAB4A and RAB11A, subcellular location and endosomal recycling.

In terms of assembly, homooligomer. Interacts with RAB11A, RAB11B, RAB25, RAB4A and RAB14.

The protein localises to the recycling endosome. It is found in the cytoplasmic vesicle. In terms of biological role, a Rab11 effector protein involved in the endosomal recycling process. Also involved in controlling membrane trafficking along the phagocytic pathway and in phagocytosis. Interaction with RAB14 may function in the process of neurite formation. This Mus musculus (Mouse) protein is Rab11 family-interacting protein 1 (Rab11fip1).